A 379-amino-acid polypeptide reads, in one-letter code: Cytochrome b (379 aa).

Helical transmembrane passes span 33–53 (FGSL…FLAM), 77–98 (WLIR…FIHV), 113–133 (WNIG…GYVL), and 178–198 (FFAF…VHLL). The heme b site is built by His83 and His97. Heme b contacts are provided by His182 and His196. His201 contributes to the a ubiquinone binding site. Helical transmembrane passes span 226-246 (TKDL…VLFF), 288-308 (LGGV…PLLN), 320-340 (VTQV…WIGG), and 347-367 (FTTI…ILIP).

Belongs to the cytochrome b family. The cytochrome bc1 complex contains 11 subunits: 3 respiratory subunits (MT-CYB, CYC1 and UQCRFS1), 2 core proteins (UQCRC1 and UQCRC2) and 6 low-molecular weight proteins (UQCRH/QCR6, UQCRB/QCR7, UQCRQ/QCR8, UQCR10/QCR9, UQCR11/QCR10 and a cleavage product of UQCRFS1). This cytochrome bc1 complex then forms a dimer. Heme b is required as a cofactor.

It localises to the mitochondrion inner membrane. Component of the ubiquinol-cytochrome c reductase complex (complex III or cytochrome b-c1 complex) that is part of the mitochondrial respiratory chain. The b-c1 complex mediates electron transfer from ubiquinol to cytochrome c. Contributes to the generation of a proton gradient across the mitochondrial membrane that is then used for ATP synthesis. This is Cytochrome b (MT-CYB) from Akodon cursor (Cursor grass mouse).